Consider the following 109-residue polypeptide: Meiotically up-regulated gene 153 protein (109 aa).

Its subcellular location is the mitochondrion. Functionally, has a role in meiosis. This chain is Meiotically up-regulated gene 153 protein (mug153), found in Schizosaccharomyces pombe (strain 972 / ATCC 24843) (Fission yeast).